Reading from the N-terminus, the 289-residue chain is 2-hydroxy-6-oxononadienedioate/2-hydroxy-6-oxononatrienedioate hydrolase 1 (289 aa).

The AB hydrolase-1 domain maps to 39–275 (TVVMLHGSGP…RCGHWAQWEH (237 aa)). His-269 acts as the Proton acceptor in catalysis.

It belongs to the AB hydrolase superfamily. MhpC family. As to quaternary structure, homodimer.

The enzyme catalyses (2Z,4E)-2-hydroxy-6-oxonona-2,4-dienedioate + H2O = (2Z)-2-hydroxypenta-2,4-dienoate + succinate + H(+). It catalyses the reaction (2Z,4E,7E)-2-hydroxy-6-oxonona-2,4,7-trienedioate + H2O = (2Z)-2-hydroxypenta-2,4-dienoate + fumarate + H(+). It participates in aromatic compound metabolism; 3-phenylpropanoate degradation. In terms of biological role, catalyzes the cleavage of the C5-C6 bond of 2-hydroxy-6-oxononadienedioate and 2-hydroxy-6-oxononatrienedioate, a dienol ring fission product of the bacterial meta-cleavage pathway for degradation of phenylpropionic acid. The protein is 2-hydroxy-6-oxononadienedioate/2-hydroxy-6-oxononatrienedioate hydrolase 1 of Dechloromonas aromatica (strain RCB).